We begin with the raw amino-acid sequence, 312 residues long: Apolipoprotein E (312 aa).

The signal sequence occupies residues 1–18 (MKALWAVLLATLLTGCLA). 8 tandem repeats follow at residues 72–93 (VLMEDTMTEVKAYKKELEEQLG), 94–115 (PVAEETRARLAKEVQAAQARLG), 116–137 (ADMEDLRNRLGQYRNEVHTMLG), 138–159 (QNTEELRSRLSTHLRKMRKRLM), 160–181 (RDAEDLQKRLAVYKAGAREGAE), 182–203 (RGVSAIRERLGPLVEQGRQRTA), 204–225 (NLGAGAAQPLRDRAQALSERLR), and 226–247 (GRLEEVGNQARDRLEEMREHME). An 8 X 22 AA approximate tandem repeats region spans residues 72 to 247 (VLMEDTMTEV…RLEEMREHME (176 aa)). The residue at position 135 (methionine 135) is a Methionine sulfoxide. The segment at 150–160 (HLRKMRKRLMR) is LDL and other lipoprotein receptors binding. The LDL receptor binding stretch occupies residues 150 to 160 (HLRKMRKRLMR). 154–157 (MRKR) serves as a coordination point for heparin. The lipid-binding and lipoprotein association stretch occupies residues 202–282 (TANLGAGAAQ…SWFEPLVEDM (81 aa)). 221 to 228 (SERLRGRL) contributes to the heparin binding site. The homooligomerization stretch occupies residues 258 to 312 (QQIRLQAEIFQARLKSWFEPLVEDMHRQLANLVEKIQSSVATNSVLSTSVPQENQ). The segment at 270–282 (RLKSWFEPLVEDM) is specificity for association with VLDL.

This sequence belongs to the apolipoprotein A1/A4/E family. Homotetramer. May interact with ABCA1; functionally associated with ABCA1 in the biogenesis of HDLs. May interact with APP/A4 amyloid-beta peptide; the interaction is extremely stable in vitro but its physiological significance is unclear. May interact with MAPT. May interact with MAP2. In the cerebrospinal fluid, interacts with secreted SORL1. Interacts with PMEL; this allows the loading of PMEL luminal fragment on ILVs to induce fibril nucleation. APOE exists as multiple glycosylated and sialylated glycoforms within cells and in plasma. The extent of glycosylation and sialylation are tissue and context specific. Post-translationally, glycated in plasma VLDL. In terms of processing, phosphorylated by FAM20C in the extracellular medium.

It is found in the secreted. Its subcellular location is the extracellular space. The protein resides in the extracellular matrix. The protein localises to the extracellular vesicle. It localises to the endosome. It is found in the multivesicular body. APOE is an apolipoprotein, a protein associating with lipid particles, that mainly functions in lipoprotein-mediated lipid transport between organs via the plasma and interstitial fluids. APOE is a core component of plasma lipoproteins and is involved in their production, conversion and clearance. Apolipoproteins are amphipathic molecules that interact both with lipids of the lipoprotein particle core and the aqueous environment of the plasma. As such, APOE associates with chylomicrons, chylomicron remnants, very low density lipoproteins (VLDL) and intermediate density lipoproteins (IDL) but shows a preferential binding to high-density lipoproteins (HDL). It also binds a wide range of cellular receptors including the LDL receptor/LDLR, the LDL receptor-related proteins LRP1, LRP2 and LRP8 and the very low-density lipoprotein receptor/VLDLR that mediate the cellular uptake of the APOE-containing lipoprotein particles. Finally, APOE also has a heparin-binding activity and binds heparan-sulfate proteoglycans on the surface of cells, a property that supports the capture and the receptor-mediated uptake of APOE-containing lipoproteins by cells. A main function of APOE is to mediate lipoprotein clearance through the uptake of chylomicrons, VLDLs, and HDLs by hepatocytes. APOE is also involved in the biosynthesis by the liver of VLDLs as well as their uptake by peripheral tissues ensuring the delivery of triglycerides and energy storage in muscle, heart and adipose tissues. By participating in the lipoprotein-mediated distribution of lipids among tissues, APOE plays a critical role in plasma and tissues lipid homeostasis. APOE is also involved in two steps of reverse cholesterol transport, the HDLs-mediated transport of cholesterol from peripheral tissues to the liver, and thereby plays an important role in cholesterol homeostasis. First, it is functionally associated with ABCA1 in the biogenesis of HDLs in tissues. Second, it is enriched in circulating HDLs and mediates their uptake by hepatocytes. APOE also plays an important role in lipid transport in the central nervous system, regulating neuron survival and sprouting. This is Apolipoprotein E (Apoe) from Arvicanthis niloticus (African grass rat).